Here is a 178-residue protein sequence, read N- to C-terminus: Large ribosomal subunit protein uL6 (178 aa).

It belongs to the universal ribosomal protein uL6 family. As to quaternary structure, part of the 50S ribosomal subunit.

Its function is as follows. This protein binds to the 23S rRNA, and is important in its secondary structure. It is located near the subunit interface in the base of the L7/L12 stalk, and near the tRNA binding site of the peptidyltransferase center. This is Large ribosomal subunit protein uL6 from Helicobacter pylori (strain J99 / ATCC 700824) (Campylobacter pylori J99).